The sequence spans 452 residues: Exodeoxyribonuclease 7 large subunit (452 aa).

Belongs to the XseA family. In terms of assembly, heterooligomer composed of large and small subunits.

It localises to the cytoplasm. It carries out the reaction Exonucleolytic cleavage in either 5'- to 3'- or 3'- to 5'-direction to yield nucleoside 5'-phosphates.. Bidirectionally degrades single-stranded DNA into large acid-insoluble oligonucleotides, which are then degraded further into small acid-soluble oligonucleotides. The chain is Exodeoxyribonuclease 7 large subunit from Bacillus mycoides (strain KBAB4) (Bacillus weihenstephanensis).